We begin with the raw amino-acid sequence, 293 residues long: Elongation factor Ts (293 aa).

An involved in Mg(2+) ion dislocation from EF-Tu region spans residues 80 to 83 (TDFV).

This sequence belongs to the EF-Ts family.

It localises to the cytoplasm. Functionally, associates with the EF-Tu.GDP complex and induces the exchange of GDP to GTP. It remains bound to the aminoacyl-tRNA.EF-Tu.GTP complex up to the GTP hydrolysis stage on the ribosome. This chain is Elongation factor Ts, found in Paraburkholderia phymatum (strain DSM 17167 / CIP 108236 / LMG 21445 / STM815) (Burkholderia phymatum).